We begin with the raw amino-acid sequence, 197 residues long: GTP cyclohydrolase-2 (197 aa).

A GTP-binding site is contributed by 50-54 (RIHSE). Cys-55, Cys-66, and Cys-68 together coordinate Zn(2+). Residues Gln-71, 93–95 (EGR), and Thr-115 contribute to the GTP site. Asp-127 acts as the Proton acceptor in catalysis. Arg-129 (nucleophile) is an active-site residue. GTP is bound by residues Thr-150 and Lys-155.

Belongs to the GTP cyclohydrolase II family. The cofactor is Zn(2+).

The catalysed reaction is GTP + 4 H2O = 2,5-diamino-6-hydroxy-4-(5-phosphoribosylamino)-pyrimidine + formate + 2 phosphate + 3 H(+). It participates in cofactor biosynthesis; riboflavin biosynthesis; 5-amino-6-(D-ribitylamino)uracil from GTP: step 1/4. In terms of biological role, catalyzes the conversion of GTP to 2,5-diamino-6-ribosylamino-4(3H)-pyrimidinone 5'-phosphate (DARP), formate and pyrophosphate. In Neisseria gonorrhoeae (strain ATCC 700825 / FA 1090), this protein is GTP cyclohydrolase-2.